The following is a 262-amino-acid chain: Small ribosomal subunit protein eS1 (262 aa).

The segment covering 1–18 (MAVGKNKRISKGKKGSKK) has biased composition (basic residues). The interval 1-20 (MAVGKNKRISKGKKGSKKKT) is disordered.

It belongs to the eukaryotic ribosomal protein eS1 family. As to quaternary structure, component of the small ribosomal subunit. Mature ribosomes consist of a small (40S) and a large (60S) subunit. The 40S subunit contains about 33 different proteins and 1 molecule of RNA (18S). The 60S subunit contains about 49 different proteins and 3 molecules of RNA (25S, 5.8S and 5S).

It is found in the cytoplasm. The protein is Small ribosomal subunit protein eS1 of Oryza sativa subsp. japonica (Rice).